The chain runs to 539 residues: Protein peanut (539 aa).

Serine 6 and serine 13 each carry phosphoserine. Residues 29-90 (LRDKQQAASA…GASNGDSNKL (62 aa)) are disordered. The span at 35–54 (AASASASSATNGSSGSESLV) shows a compositional bias: low complexity. The Septin-type G domain maps to 139-411 (RGFEFTLMVV…ENYRCRKLSE (273 aa)). Positions 149-156 (GASGLGKS) are G1 motif. GTP contacts are provided by residues 149–156 (GASGLGKS), threonine 183, glycine 209, 288–296 (KADTMTPDE), glycine 345, and arginine 360. Residues 206-209 (DTPG) are G3 motif. The G4 motif stretch occupies residues 287–290 (AKAD). Residues 420–516 (RLSNKNPLTQ…HVTLEELKRR (97 aa)) are a coiled coil. Residues 513 to 539 (LKRRSLGANSSTDNVDGKKEKKKKGLF) form a disordered region. Residue serine 517 is modified to Phosphoserine.

It belongs to the TRAFAC class TrmE-Era-EngA-EngB-Septin-like GTPase superfamily. Septin GTPase family. Likely part of a multicomponent septin complex that includes Septin1. Interacts with Septin1. Interacts with hil. Interacts with park. Ubiquitinated by park, leading to its degradation by the proteasome. As to expression, accumulates at the leading edge of the cleavage furrow in dividing cells and cellularizing embryos (at protein level).

It localises to the apical cell membrane. The protein localises to the cleavage furrow. It is found in the cytoplasm. The protein resides in the cell cortex. Involved in cytokinesis and possibly cellularization. Also acts as an enhancer of the sina gene, thus having a role in photoreceptor development. May be involved in p53-dependent apoptosis. The polypeptide is Protein peanut (pnut) (Drosophila melanogaster (Fruit fly)).